A 940-amino-acid chain; its full sequence is UvrABC system protein A (940 aa).

Residue 31–38 (GLSGSGKS) participates in ATP binding. The C4-type zinc finger occupies 252-279 (CPHCGYSMQELEPRLFSFNNPAGACGTC). ABC transporter domains follow at residues 309–586 (WDQK…PDSL) and 606–936 (RDKN…RFLK). ATP is bound at residue 639 to 646 (GVSGSGKS). Residues 739–765 (CEACQGDGVIKVEMHFLPDVYVPCDVC) form a C4-type zinc finger.

Belongs to the ABC transporter superfamily. UvrA family. Forms a heterotetramer with UvrB during the search for lesions.

It is found in the cytoplasm. In terms of biological role, the UvrABC repair system catalyzes the recognition and processing of DNA lesions. UvrA is an ATPase and a DNA-binding protein. A damage recognition complex composed of 2 UvrA and 2 UvrB subunits scans DNA for abnormalities. When the presence of a lesion has been verified by UvrB, the UvrA molecules dissociate. The polypeptide is UvrABC system protein A (Vibrio vulnificus (strain YJ016)).